We begin with the raw amino-acid sequence, 22 residues long: EXSEQNPNILEIKPGDTVKVXT.

Positions 1 to 22 are disordered; sequence EXSEQNPNILEIKPGDTVKVXT.

In terms of assembly, heterotrimer of alpha, beta and gamma subunits. Requires heme b as cofactor.

Its subcellular location is the cytoplasm. May transfer electrons to the iron-sulfur centers of the beta subunit of chlorate reductase. This Stutzerimonas chloritidismutans (Pseudomonas chloritidismutans) protein is Chlorate reductase subunit gamma.